The chain runs to 381 residues: Creatine kinase M-type (381 aa).

One can recognise a Phosphagen kinase N-terminal domain in the interval 11-98 (KLKFSAEEEF…FDPVIQDRHG (88 aa)). Residues 99-118 (GYKPTDKHRTDLNHENLKGG) are disordered. In terms of domain architecture, Phosphagen kinase C-terminal spans 125 to 367 (YVLSSRVRTG…KLMVEMEKKL (243 aa)). ATP is bound by residues 128–132 (SSRVR), histidine 191, arginine 236, arginine 292, 320–325 (RGTGGV), and aspartate 335.

Belongs to the ATP:guanido phosphotransferase family. In terms of assembly, dimer of identical or non-identical chains, which can be either B (brain type) or M (muscle type). With MM being the major form in skeletal muscle and myocardium, MB existing in myocardium, and BB existing in many tissues, especially brain. Predominantly found in skeletal muscle, but not in the heart.

It is found in the cytoplasm. The catalysed reaction is creatine + ATP = N-phosphocreatine + ADP + H(+). In terms of biological role, reversibly catalyzes the transfer of phosphate between ATP and various phosphogens (e.g. creatine phosphate). Creatine kinase isoenzymes play a central role in energy transduction in tissues with large, fluctuating energy demands, such as skeletal muscle, heart, brain and spermatozoa. This Gallus gallus (Chicken) protein is Creatine kinase M-type.